The following is an 82-amino-acid chain: UPF0235 protein Pden_2174 (82 aa).

This sequence belongs to the UPF0235 family.

The chain is UPF0235 protein Pden_2174 from Paracoccus denitrificans (strain Pd 1222).